We begin with the raw amino-acid sequence, 315 residues long: Replication factor C small subunit (315 aa).

ATP is bound at residue 43 to 50; sequence GSPGVGKT.

Belongs to the activator 1 small subunits family. RfcS subfamily. As to quaternary structure, heteromultimer composed of small subunits (RfcS) and large subunits (RfcL).

Functionally, part of the RFC clamp loader complex which loads the PCNA sliding clamp onto DNA. This chain is Replication factor C small subunit, found in Methanococcus maripaludis (strain C7 / ATCC BAA-1331).